The primary structure comprises 269 residues: Cytochrome c oxidase subunit 3 (269 aa).

Transmembrane regions (helical) follow at residues 24 to 44 (FYNS…MHGF), 46 to 66 (NMYI…TLWF), 90 to 110 (GVGL…WTFF), 132 to 152 (IDPF…GVTV), 167 to 187 (ALYG…FQGI), 207 to 227 (FSTG…SVGL), and 247 to 267 (ILYW…IYFW).

Belongs to the cytochrome c oxidase subunit 3 family. Component of the cytochrome c oxidase (complex IV, CIV), a multisubunit enzyme composed of a catalytic core of 3 subunits and several supernumerary subunits. The complex exists as a monomer or a dimer and forms supercomplexes (SCs) in the inner mitochondrial membrane with ubiquinol-cytochrome c oxidoreductase (cytochrome b-c1 complex, complex III, CIII).

It localises to the mitochondrion inner membrane. The catalysed reaction is 4 Fe(II)-[cytochrome c] + O2 + 8 H(+)(in) = 4 Fe(III)-[cytochrome c] + 2 H2O + 4 H(+)(out). Component of the cytochrome c oxidase, the last enzyme in the mitochondrial electron transport chain which drives oxidative phosphorylation. The respiratory chain contains 3 multisubunit complexes succinate dehydrogenase (complex II, CII), ubiquinol-cytochrome c oxidoreductase (cytochrome b-c1 complex, complex III, CIII) and cytochrome c oxidase (complex IV, CIV), that cooperate to transfer electrons derived from NADH and succinate to molecular oxygen, creating an electrochemical gradient over the inner membrane that drives transmembrane transport and the ATP synthase. Cytochrome c oxidase is the component of the respiratory chain that catalyzes the reduction of oxygen to water. Electrons originating from reduced cytochrome c in the intermembrane space (IMS) are transferred via the dinuclear copper A center (CU(A)) of subunit 2 and heme A of subunit 1 to the active site in subunit 1, a binuclear center (BNC) formed by heme A3 and copper B (CU(B)). The BNC reduces molecular oxygen to 2 water molecules using 4 electrons from cytochrome c in the IMS and 4 protons from the mitochondrial matrix. The chain is Cytochrome c oxidase subunit 3 (COXIII) from Trichophyton rubrum (Athlete's foot fungus).